Here is a 256-residue protein sequence, read N- to C-terminus: Major prion protein (256 aa).

The first 24 residues, 1–24, serve as a signal peptide directing secretion; sequence MVKSHIGSWILVLFVAMWSDVGLC. Residues 25-233 form an interaction with GRB2, ERI3 and SYN1 region; sequence KKRPKPGGGW…ESQAYYQRGA (209 aa). A disordered region spans residues 28–110; it reads PKPGGGWNTG…QWNKPSKPKT (83 aa). A run of 5 repeats spans residues 54–62, 63–70, 71–78, 79–86, and 87–95. The interval 54 to 95 is 5 X 8 AA tandem repeats of P-H-G-G-G-W-G-Q; that stretch reads PQGGGGWGQPHGGGWGQPHGGGWGQPHGGGWGQPHGGGGWGQ. The span at 55-97 shows a compositional bias: gly residues; it reads QGGGGWGQPHGGGWGQPHGGGWGQPHGGGWGQPHGGGGWGQGG. Residues histidine 64, glycine 65, glycine 66, histidine 72, glycine 73, glycine 74, histidine 80, glycine 81, glycine 82, histidine 88, glycine 90, and glycine 91 each coordinate Cu(2+). Cysteine 182 and cysteine 217 are oxidised to a cystine. Residues asparagine 184 and asparagine 200 are each glycosylated (N-linked (GlcNAc...) (complex) asparagine). Residue alanine 233 is the site of GPI-anchor amidated alanine attachment. The propeptide at 234 to 256 is removed in mature form; the sequence is SVILFSSPPVILLISFLIFLIVG.

Belongs to the prion family. As to quaternary structure, monomer and homodimer. Has a tendency to aggregate into amyloid fibrils containing a cross-beta spine, formed by a steric zipper of superposed beta-strands. Soluble oligomers may represent an intermediate stage on the path to fibril formation. Copper binding may promote oligomerization. Interacts with GRB2, APP, ERI3/PRNPIP and SYN1. Mislocalized cytosolically exposed PrP interacts with MGRN1; this interaction alters MGRN1 subcellular location and causes lysosomal enlargement. Interacts with KIAA1191.

The protein localises to the cell membrane. It localises to the golgi apparatus. Functionally, its primary physiological function is unclear. Has cytoprotective activity against internal or environmental stresses. May play a role in neuronal development and synaptic plasticity. May be required for neuronal myelin sheath maintenance. May play a role in iron uptake and iron homeostasis. Soluble oligomers are toxic to cultured neuroblastoma cells and induce apoptosis (in vitro). Association with GPC1 (via its heparan sulfate chains) targets PRNP to lipid rafts. Also provides Cu(2+) or Zn(2+) for the ascorbate-mediated GPC1 deaminase degradation of its heparan sulfate side chains. This chain is Major prion protein (PRNP), found in Ovis aries (Sheep).